We begin with the raw amino-acid sequence, 495 residues long: Divinyl ether synthase CYP74M3 (495 aa).

Heme is bound at residue Cys-446.

The protein belongs to the cytochrome P450 family. Heme serves as cofactor.

It catalyses the reaction (13S)-hydroperoxy-(9Z,11E)-octadecadienoate = etheroleate + H2O. The catalysed reaction is (13S)-hydroperoxy-(9Z,11E,15Z)-octadecatrienoate = etherolenate + H2O. It functions in the pathway lipid metabolism; oxylipin biosynthesis. In terms of biological role, divinyl ether synthase involved in oxylipin biosynthesis. Catalyzes the conversion of (13S)-hydroperoxy-(9Z,11E)-octadecadienoate (13-HPOD) to etheroleate and (13S)-hydroperoxy-(9Z,11E,15Z)-octadecatrienoate (13-HPOT) to etherolenate. Has no activity with the corresponding 9-hydroperoxides (9-HPOD and 9-HPOT). This is Divinyl ether synthase CYP74M3 from Selaginella moellendorffii (Spikemoss).